The following is a 261-amino-acid chain: Kallikrein 1-related peptidase b1 (261 aa).

The N-terminal stretch at 1–18 (MWFLILFLALSLGGIDAA) is a signal peptide. The propeptide at 19 to 24 (PPVQSR) is activation peptide. The region spanning 25–258 (IVGGFKCEKN…FTSWIKDTLA (234 aa)) is the Peptidase S1 domain. Cystine bridges form between Cys31-Cys173, Cys50-Cys66, Cys152-Cys219, Cys184-Cys198, and Cys209-Cys234. His65 functions as the Charge relay system in the catalytic mechanism. N-linked (GlcNAc...) asparagine glycosylation is present at Asn102. Asp120 functions as the Charge relay system in the catalytic mechanism. The active-site Charge relay system is Ser213.

It belongs to the peptidase S1 family. Kallikrein subfamily.

The enzyme catalyses Preferential cleavage of Arg-|-Xaa bonds in small molecule substrates. Highly selective action to release kallidin (lysyl-bradykinin) from kininogen involves hydrolysis of Met-|-Xaa or Leu-|-Xaa.. In terms of biological role, glandular kallikreins cleave Met-Lys and Arg-Ser bonds in kininogen to release Lys-bradykinin. The chain is Kallikrein 1-related peptidase b1 (Klk1b1) from Mus musculus (Mouse).